The sequence spans 369 residues: Peptide chain release factor 2 (369 aa).

Q252 carries the N5-methylglutamine modification.

Belongs to the prokaryotic/mitochondrial release factor family. Methylated by PrmC. Methylation increases the termination efficiency of RF2.

The protein resides in the cytoplasm. In terms of biological role, peptide chain release factor 2 directs the termination of translation in response to the peptide chain termination codons UGA and UAA. The polypeptide is Peptide chain release factor 2 (Staphylococcus aureus (strain MRSA252)).